The sequence spans 115 residues: Meiotically up-regulated gene 106 protein (115 aa).

An N-terminal signal peptide occupies residues 1-34; that stretch reads MSIKVEWIKFTRLKKCATLLVQLSLLRYRYMVLA. Helical transmembrane passes span 41 to 60 and 81 to 103; these read CIVV…GALF and GVKL…FTPY.

The protein localises to the membrane. Functionally, has a role in meiosis. This Schizosaccharomyces pombe (strain 972 / ATCC 24843) (Fission yeast) protein is Meiotically up-regulated gene 106 protein (mug106).